Here is a 530-residue protein sequence, read N- to C-terminus: MINYKNLNELENFKILERIDPEVLKTVLTGKRIKEYDITIEGDSVHYNYASKQINENHLKIFQNLSDEANLIEKYKEILNGERVNISENRKVLHHLTRGQIGKDVIEDNKENMREFFQSELEKIYNFAKQIHSGNIKSANGKKFKNVVQIGIGGSSLGPKALYSSIKNYAKKHNLALMNGYFISNIDPDESAEVLNSINIDETLFIIVSKSGNTLETKANMQFLINKLKSNGIKEYKKQMVIITLKNSMLALEEKGYLEYFFMHDSIGGRFSPTSAVGLVLLALCFTEKIVKEILKGANKADKKSLNKNVKDNAPLLAALISIYERNVLNYSSNCIIAYSKAMENFYLHLQQLEMESNGKSVNRFNETINYKTVRIIWGGIGTDVQHSFFQMLHQGTDIVPMDFIGFNETQLKEDVISDNSSSNDKLKANLIAQIIAFSKGKENSNKNKNFKGERPSALIYSKELTPYAIGSILSHYENKVMFEGFLLNINSFDQEGVQLGKTLANQILKNDTFEDEAIESYSKKILKQD.

Glu356 (proton donor) is an active-site residue. Residues His387 and Lys502 contribute to the active site.

Belongs to the GPI family.

It localises to the cytoplasm. The enzyme catalyses alpha-D-glucose 6-phosphate = beta-D-fructose 6-phosphate. It participates in carbohydrate biosynthesis; gluconeogenesis. Its pathway is carbohydrate degradation; glycolysis; D-glyceraldehyde 3-phosphate and glycerone phosphate from D-glucose: step 2/4. Its function is as follows. Catalyzes the reversible isomerization of glucose-6-phosphate to fructose-6-phosphate. This Borreliella afzelii (strain PKo) (Borrelia afzelii) protein is Glucose-6-phosphate isomerase.